Consider the following 115-residue polypeptide: MAATLSEIRELIQSLTKTANEIKAMLERNSAGKPTGIEEAAAKIIKDIGDKIDQCECTKKIEEMLDQKQNADTQIVPTKQESSGLVKYSYPNWNVGNEELGSSGNPNAVKWPPRK.

Coiled-coil stretches lie at residues M1–R28 and K33–Q54. Polar residues predominate over residues G96 to P106. Residues G96–K115 form a disordered region.

Belongs to the caulimovirus ORF III family. Homotetramer, through coiled-coil domain. Homotrimer when interacts with icosehadral capsid. Interacts with capsid protein, and with Movement protein.

The protein resides in the virion. The protein localises to the host cell junction. It is found in the host plasmodesma. Its function is as follows. Plays a role in virus cell-to-cell and plant-to-plant transmission. Interacts with virion icosahedral capsid and movement protein, thereby facilitating virion cell-to-cell transmission through plasmodesmata opened by viral movement protein. Also interacts with aphid transmission factor, attaching the virion to aphid stylet when the animal feeds on an virus infected plant. Aphid saliva may later detach the virion, inducing release of infectious particles when the animal feeds on a new plant. This is Virion-associated protein from Scrophularia californica (California bee plant).